We begin with the raw amino-acid sequence, 282 residues long: MSSYANHQALAGLTLGKSTDYRDTYDASLLQGVPRSLNRDPLGLKADNLPFQGTDIWTLYELSWLNAKGLPQVAVGHVELDYTSVNLIESKSFKLYLNSFNQTRFNNWDEVRQTLERDLSTCAQGEVSVALYRLDELEGQPIGHFNGTCIDDQDITIDNYEFTTDYLENATSGEKVVEETLVSHLLKSNCLITHQPDWGSIQIQYRGRQIDREKLLRYLVSFRHHNEFHEQCVERIFNDLLRFCQPEKLSVYARYTRRGGLDINPWRSNSDFVPSTTRLVRQ.

A substrate-binding site is contributed by 88–90 (IES). 90–91 (SK) is an NADPH binding site. Residue Cys-190 is the Thioimide intermediate of the active site. Catalysis depends on Asp-197, which acts as the Proton donor. 229–230 (HE) serves as a coordination point for substrate. Residue 258 to 259 (RG) participates in NADPH binding.

This sequence belongs to the GTP cyclohydrolase I family. QueF type 2 subfamily. As to quaternary structure, homodimer.

It is found in the cytoplasm. The catalysed reaction is 7-aminomethyl-7-carbaguanine + 2 NADP(+) = 7-cyano-7-deazaguanine + 2 NADPH + 3 H(+). The protein operates within tRNA modification; tRNA-queuosine biosynthesis. Functionally, catalyzes the NADPH-dependent reduction of 7-cyano-7-deazaguanine (preQ0) to 7-aminomethyl-7-deazaguanine (preQ1). The polypeptide is NADPH-dependent 7-cyano-7-deazaguanine reductase (Escherichia coli O157:H7).